Here is a 423-residue protein sequence, read N- to C-terminus: WD repeat and SOCS box-containing protein 1 (423 aa).

Residues 76 to 100 are disordered; it reads DRSSGAGPRRLSRQNSEGSLLPGEP. 5 WD repeats span residues 125 to 166, 169 to 209, 213 to 252, 255 to 294, and 310 to 347; these read SRCV…LLLN, DHTD…NMVK, GHQN…LIRK, GHHN…VLLE, and ANDR…KSPQ. The SOCS box domain occupies 373 to 423; that stretch reads DGSVHFWASPRSIASLQHLCRMTLRRVMPTQQVYTLPIPFSMQDYLAYKTL.

As to quaternary structure, component of a probable ECS E3 ubiquitin-protein ligase complex that contains the Elongin BC complex.

The protein operates within protein modification; protein ubiquitination. Its function is as follows. Probable substrate-recognition component of a SCF-like ECS (Elongin-Cullin-SOCS-box protein) E3 ubiquitin-protein ligase complex which mediates the ubiquitination and subsequent proteasomal degradation of target proteins. The polypeptide is WD repeat and SOCS box-containing protein 1 (wsb1) (Danio rerio (Zebrafish)).